A 370-amino-acid polypeptide reads, in one-letter code: Phospho-N-acetylmuramoyl-pentapeptide-transferase (370 aa).

A run of 10 helical transmembrane segments spans residues 3–23 (QIII…PVLI), 54–74 (GLAI…YGLL), 79–99 (AFTA…AVGF), 118–138 (AKLI…LRFP), 161–181 (LAVG…YILI), 197–217 (LAAG…FWQF), 238–258 (LAVL…WNAA), 262–282 (IFMG…ISVT), 290–310 (IIIG…IVVF), and 341–361 (FWLL…GDWL).

Belongs to the glycosyltransferase 4 family. MraY subfamily. The cofactor is Mg(2+).

Its subcellular location is the cell membrane. It catalyses the reaction UDP-N-acetyl-alpha-D-muramoyl-L-alanyl-gamma-D-glutamyl-meso-2,6-diaminopimeloyl-D-alanyl-D-alanine + di-trans,octa-cis-undecaprenyl phosphate = di-trans,octa-cis-undecaprenyl diphospho-N-acetyl-alpha-D-muramoyl-L-alanyl-D-glutamyl-meso-2,6-diaminopimeloyl-D-alanyl-D-alanine + UMP. The protein operates within cell wall biogenesis; peptidoglycan biosynthesis. Functionally, catalyzes the initial step of the lipid cycle reactions in the biosynthesis of the cell wall peptidoglycan: transfers peptidoglycan precursor phospho-MurNAc-pentapeptide from UDP-MurNAc-pentapeptide onto the lipid carrier undecaprenyl phosphate, yielding undecaprenyl-pyrophosphoryl-MurNAc-pentapeptide, known as lipid I. The polypeptide is Phospho-N-acetylmuramoyl-pentapeptide-transferase (Corynebacterium aurimucosum (strain ATCC 700975 / DSM 44827 / CIP 107346 / CN-1) (Corynebacterium nigricans)).